The primary structure comprises 217 residues: MPCRIAIDGPAGSGKTTVAKLLADALGIFYLDTGAMYRIVGLYLSENNVESDEEIERKLKELKITFSNGNFFLNGRKIGNEIRTPEIGIYASKYAKRLPVRNYLTKIQREIAKNQSIVVEGRDIGTVVLPDAEVKIFLVASQEARAKRRYKELMEKGVEVTFEEVLSEIVLRDKQDSERDVAPLKKAKDAILIDTTNLSIEEVIERILKVVKEKCKL.

Gly9 to Thr17 provides a ligand contact to ATP.

It belongs to the cytidylate kinase family. Type 1 subfamily.

It is found in the cytoplasm. The catalysed reaction is CMP + ATP = CDP + ADP. It carries out the reaction dCMP + ATP = dCDP + ADP. This Thermosipho melanesiensis (strain DSM 12029 / CIP 104789 / BI429) protein is Cytidylate kinase.